The primary structure comprises 480 residues: Gasdermin-C4 (480 aa).

The triggers pyroptosis stretch occupies residues 1–226; the sequence is MGYSFDRASK…TCVILPSATK (226 aa).

It belongs to the gasdermin family. Homooligomer; homooligomeric ring-shaped pore complex containing 27-28 subunits when inserted in the membrane. Cleavage by CASP8 relieves autoinhibition by releasing the N-terminal moiety (Gasdermin-C4, N-terminal) that initiates pyroptosis. Post-translationally, palmitoylated.

It is found in the cytoplasm. It localises to the cytosol. The protein localises to the cell membrane. Its activity is regulated as follows. The full-length protein before cleavage is inactive: intramolecular interactions between N- and C-terminal domains mediate autoinhibition in the absence of activation signal. The intrinsic pyroptosis-inducing activity is carried by the released N-terminal moiety (Gasdermin-C4, N-terminal) following cleavage by caspase CASP8. Functionally, this form constitutes the precursor of the pore-forming protein: upon cleavage, the released N-terminal moiety (Gasdermin-C4, N-terminal) binds to membranes and forms pores, triggering pyroptosis. Its function is as follows. Pore-forming protein that causes membrane permeabilization and pyroptosis. Produced by the cleavage of gasdermin-C4 by caspase CASP8 in response to death signals. After cleavage, moves to the plasma membrane where it strongly binds to membrane inner leaflet lipids. Homooligomerizes within the membrane and forms pores of 10-15 nanometers (nm) of inner diameter, triggering pyroptosis. The polypeptide is Gasdermin-C4 (Mus musculus (Mouse)).